The following is a 453-amino-acid chain: Allantoinase (453 aa).

Zn(2+) contacts are provided by His-59, His-61, Lys-146, His-186, His-242, and Asp-315. Lys-146 is modified (N6-carboxylysine).

It belongs to the metallo-dependent hydrolases superfamily. Allantoinase family. In terms of assembly, homotetramer. Zn(2+) serves as cofactor. Carboxylation allows a single lysine to coordinate two zinc ions.

The catalysed reaction is (S)-allantoin + H2O = allantoate + H(+). It functions in the pathway nitrogen metabolism; (S)-allantoin degradation; allantoate from (S)-allantoin: step 1/1. Its function is as follows. Catalyzes the conversion of allantoin (5-ureidohydantoin) to allantoic acid by hydrolytic cleavage of the five-member hydantoin ring. This Salmonella agona (strain SL483) protein is Allantoinase.